A 235-amino-acid polypeptide reads, in one-letter code: (5-formylfuran-3-yl)methyl phosphate synthase (235 aa).

The Schiff-base intermediate with substrate role is filled by lysine 27. Lysine 85 functions as the Proton acceptor in the catalytic mechanism.

Belongs to the MfnB family.

It catalyses the reaction 2 D-glyceraldehyde 3-phosphate = 4-(hydroxymethyl)-2-furancarboxaldehyde phosphate + phosphate + 2 H2O. It functions in the pathway cofactor biosynthesis; methanofuran biosynthesis. Catalyzes the formation of 4-(hydroxymethyl)-2-furancarboxaldehyde phosphate (4-HFC-P) from two molecules of glyceraldehyde-3-P (GA-3-P). This Methanococcus aeolicus (strain ATCC BAA-1280 / DSM 17508 / OCM 812 / Nankai-3) protein is (5-formylfuran-3-yl)methyl phosphate synthase.